We begin with the raw amino-acid sequence, 878 residues long: AP-2 complex subunit alpha (878 aa).

The protein belongs to the adaptor complexes large subunit family. As to quaternary structure, adaptor protein complex 2 (AP-2) is a heterotetramer composed of two large adaptins (alpha-type subunit apl3 and beta-type subunit apl1), a medium chain (mu-type subunit apm4) and a small adaptin (sigma-type subunit aps2).

It is found in the cell membrane. It localises to the membrane. The protein resides in the coated pit. Its function is as follows. Adaptins are components of the adaptor complexes which link clathrin to receptors in coated vesicles. Clathrin-associated protein complexes are believed to interact with the cytoplasmic tails of membrane proteins, leading to their selection and concentration. Alpha adaptin is a subunit of the plasma membrane adaptor. The polypeptide is AP-2 complex subunit alpha (apl3) (Schizosaccharomyces pombe (strain 972 / ATCC 24843) (Fission yeast)).